Reading from the N-terminus, the 488-residue chain is R3H and coiled-coil domain-containing protein 1 (488 aa).

Residues 16 to 81 enclose the R3H domain; sequence NDFVHRVQEE…KRRTVICHLD (66 aa). Disordered regions lie at residues 87-180 and 195-322; these read SDGP…GDAE and KSPD…DADH. Residues 114-125 are compositionally biased toward low complexity; it reads GAAAGPRGAPAG. At Ser-232 the chain carries Phosphoserine. Residues 244–321 adopt a coiled-coil conformation; it reads SHGMRSLVDQ…EEDEDEADAD (78 aa). Positions 252–265 are enriched in acidic residues; the sequence is DQEEEEIEGEEEEK. 2 stretches are compositionally biased toward basic and acidic residues: residues 266-280 and 287-301; these read VDEK…KERV and TDAQ…GERM. Residues 302 to 319 show a composition bias toward acidic residues; that stretch reads DEGEDKVDAEEEDEDEAD.

The chain is R3H and coiled-coil domain-containing protein 1 from Mus musculus (Mouse).